Here is a 149-residue protein sequence, read N- to C-terminus: D-aminoacyl-tRNA deacylase (149 aa).

The Gly-cisPro motif, important for rejection of L-amino acids signature appears at 137-138 (GP).

This sequence belongs to the DTD family. In terms of assembly, homodimer.

The protein localises to the cytoplasm. The catalysed reaction is glycyl-tRNA(Ala) + H2O = tRNA(Ala) + glycine + H(+). It catalyses the reaction a D-aminoacyl-tRNA + H2O = a tRNA + a D-alpha-amino acid + H(+). Functionally, an aminoacyl-tRNA editing enzyme that deacylates mischarged D-aminoacyl-tRNAs. Also deacylates mischarged glycyl-tRNA(Ala), protecting cells against glycine mischarging by AlaRS. Acts via tRNA-based rather than protein-based catalysis; rejects L-amino acids rather than detecting D-amino acids in the active site. By recycling D-aminoacyl-tRNA to D-amino acids and free tRNA molecules, this enzyme counteracts the toxicity associated with the formation of D-aminoacyl-tRNA entities in vivo and helps enforce protein L-homochirality. This Leuconostoc mesenteroides subsp. mesenteroides (strain ATCC 8293 / DSM 20343 / BCRC 11652 / CCM 1803 / JCM 6124 / NCDO 523 / NBRC 100496 / NCIMB 8023 / NCTC 12954 / NRRL B-1118 / 37Y) protein is D-aminoacyl-tRNA deacylase.